A 156-amino-acid polypeptide reads, in one-letter code: SsrA-binding protein (156 aa).

Belongs to the SmpB family.

It localises to the cytoplasm. Its function is as follows. Required for rescue of stalled ribosomes mediated by trans-translation. Binds to transfer-messenger RNA (tmRNA), required for stable association of tmRNA with ribosomes. tmRNA and SmpB together mimic tRNA shape, replacing the anticodon stem-loop with SmpB. tmRNA is encoded by the ssrA gene; the 2 termini fold to resemble tRNA(Ala) and it encodes a 'tag peptide', a short internal open reading frame. During trans-translation Ala-aminoacylated tmRNA acts like a tRNA, entering the A-site of stalled ribosomes, displacing the stalled mRNA. The ribosome then switches to translate the ORF on the tmRNA; the nascent peptide is terminated with the 'tag peptide' encoded by the tmRNA and targeted for degradation. The ribosome is freed to recommence translation, which seems to be the essential function of trans-translation. The protein is SsrA-binding protein of Clostridium botulinum (strain Alaska E43 / Type E3).